The chain runs to 205 residues: LexA repressor (205 aa).

The segment at residues 28-48 (VREIGEAVGLASSSTVHGHLA) is a DNA-binding region (H-T-H motif). Active-site for autocatalytic cleavage activity residues include serine 127 and lysine 165.

This sequence belongs to the peptidase S24 family. Homodimer. In terms of processing, following treatment with mitomycin C protein levels begin to decrease after a 5-min lag and do not return to their original levels for at least 90 minutes.

It catalyses the reaction Hydrolysis of Ala-|-Gly bond in repressor LexA.. Functionally, represses dinA, dinB, dinC, recA genes and itself by binding to the 14 bp palindromic sequence 5'-CGAACNNNNGTTCG-3'; some genes have a tandem consensus sequence and their binding is cooperative. In the presence of single-stranded DNA, RecA interacts with LexA causing an autocatalytic cleavage which disrupts the DNA-binding part of LexA, leading to derepression of the SOS regulon and eventually DNA repair; autocleavage is maximal at pH 11 in the absence of RecA and ssDNA. This chain is LexA repressor, found in Bacillus subtilis (strain 168).